The primary structure comprises 121 residues: uncharacterized protein (121 aa).

3 helical membrane passes run 12-32 (MIGIAALAVGIVLGLVFHPGV), 35-55 (VIQPYLPIAVVAALDAVFGGL), and 67-87 (VFVVSFVFNVLVAALIVYVGD).

Belongs to the sbp family.

Its subcellular location is the cell membrane. This is an uncharacterized protein from Mycobacterium bovis (strain ATCC BAA-935 / AF2122/97).